A 134-amino-acid polypeptide reads, in one-letter code: Profilin-2 (134 aa).

A disulfide bridge links C13 with C118. The Involved in PIP2 interaction motif lies at 84-100; sequence AVIRGKKGSGGITIKKT. T114 is modified (phosphothreonine).

The protein belongs to the profilin family. Occurs in many kinds of cells as a complex with monomeric actin in a 1:1 ratio. In terms of processing, phosphorylated by MAP kinases.

It is found in the cytoplasm. The protein localises to the cytoskeleton. Its function is as follows. Binds to actin and affects the structure of the cytoskeleton. At high concentrations, profilin prevents the polymerization of actin, whereas it enhances it at low concentrations. By binding to PIP2, it inhibits the formation of IP3 and DG. This is Profilin-2 (PRO2) from Olea europaea (Common olive).